Reading from the N-terminus, the 282-residue chain is Lipoyl synthase (282 aa).

Cys-37, Cys-42, Cys-48, Cys-63, Cys-67, Cys-70, and Ser-274 together coordinate [4Fe-4S] cluster. In terms of domain architecture, Radical SAM core spans 49–263 (WGKGTATFMI…KTIGLEKGFS (215 aa)).

It belongs to the radical SAM superfamily. Lipoyl synthase family. Requires [4Fe-4S] cluster as cofactor.

It is found in the cytoplasm. The enzyme catalyses [[Fe-S] cluster scaffold protein carrying a second [4Fe-4S](2+) cluster] + N(6)-octanoyl-L-lysyl-[protein] + 2 oxidized [2Fe-2S]-[ferredoxin] + 2 S-adenosyl-L-methionine + 4 H(+) = [[Fe-S] cluster scaffold protein] + N(6)-[(R)-dihydrolipoyl]-L-lysyl-[protein] + 4 Fe(3+) + 2 hydrogen sulfide + 2 5'-deoxyadenosine + 2 L-methionine + 2 reduced [2Fe-2S]-[ferredoxin]. Its pathway is protein modification; protein lipoylation via endogenous pathway; protein N(6)-(lipoyl)lysine from octanoyl-[acyl-carrier-protein]: step 2/2. Catalyzes the radical-mediated insertion of two sulfur atoms into the C-6 and C-8 positions of the octanoyl moiety bound to the lipoyl domains of lipoate-dependent enzymes, thereby converting the octanoylated domains into lipoylated derivatives. This Bacteroides thetaiotaomicron (strain ATCC 29148 / DSM 2079 / JCM 5827 / CCUG 10774 / NCTC 10582 / VPI-5482 / E50) protein is Lipoyl synthase.